A 464-amino-acid polypeptide reads, in one-letter code: Glycine--tRNA ligase (464 aa).

2 residues coordinate substrate: Arg104 and Glu175. Residues 207 to 209, 217 to 222, 292 to 293, and 336 to 339 each bind ATP; these read RNE, FRTREF, EL, and GVNR. 222–226 is a substrate binding site; sequence FEQME. 332–336 lines the substrate pocket; it reads EPALG.

This sequence belongs to the class-II aminoacyl-tRNA synthetase family. In terms of assembly, homodimer.

The protein resides in the cytoplasm. The enzyme catalyses tRNA(Gly) + glycine + ATP = glycyl-tRNA(Gly) + AMP + diphosphate. Catalyzes the attachment of glycine to tRNA(Gly). The chain is Glycine--tRNA ligase from Leptospira interrogans serogroup Icterohaemorrhagiae serovar copenhageni (strain Fiocruz L1-130).